The sequence spans 100 residues: Integration host factor subunit alpha (100 aa).

Residues 53 to 72 (FQLRDKPQRPGRNPKTGEEV) form a disordered region.

It belongs to the bacterial histone-like protein family. As to quaternary structure, heterodimer of an alpha and a beta chain.

This protein is one of the two subunits of integration host factor, a specific DNA-binding protein that functions in genetic recombination as well as in transcriptional and translational control. The protein is Integration host factor subunit alpha of Neisseria gonorrhoeae (strain ATCC 700825 / FA 1090).